The chain runs to 363 residues: tRNA N6-adenosine threonylcarbamoyltransferase (363 aa).

Histidine 121 and histidine 125 together coordinate Fe cation. Residues 143-147 (LASGG), aspartate 176, glycine 189, and asparagine 287 contribute to the substrate site. Aspartate 315 contributes to the Fe cation binding site.

Belongs to the KAE1 / TsaD family. Requires Fe(2+) as cofactor.

The protein localises to the cytoplasm. The catalysed reaction is L-threonylcarbamoyladenylate + adenosine(37) in tRNA = N(6)-L-threonylcarbamoyladenosine(37) in tRNA + AMP + H(+). In terms of biological role, required for the formation of a threonylcarbamoyl group on adenosine at position 37 (t(6)A37) in tRNAs that read codons beginning with adenine. Is involved in the transfer of the threonylcarbamoyl moiety of threonylcarbamoyl-AMP (TC-AMP) to the N6 group of A37, together with TsaE and TsaB. TsaD likely plays a direct catalytic role in this reaction. This Rhodopseudomonas palustris (strain ATCC BAA-98 / CGA009) protein is tRNA N6-adenosine threonylcarbamoyltransferase.